An 862-amino-acid polypeptide reads, in one-letter code: Alpha,alpha-trehalose-phosphate synthase [UDP-forming] 5 (862 aa).

Serine 5 is subject to Phosphoserine. Threonine 32 is subject to Phosphothreonine. Positions 60–546 (DRIIIVGNQL…ARSFIQDLER (487 aa)) are glycosyltransferase.

The protein in the N-terminal section; belongs to the glycosyltransferase 20 family. In the C-terminal section; belongs to the trehalose phosphatase family. In terms of assembly, binds to the phosphopeptide-binding site of GRF/14-3-3 and to MBF1c. In terms of processing, both Ser-5 and Thr-32 must be phosphorylated for binding to GRF/14-3-3. In terms of tissue distribution, low expression in leaves, stems, flower buds, flowers and siliques.

The enzyme catalyses D-glucose 6-phosphate + UDP-alpha-D-glucose = alpha,alpha-trehalose 6-phosphate + UDP + H(+). The chain is Alpha,alpha-trehalose-phosphate synthase [UDP-forming] 5 (TPS5) from Arabidopsis thaliana (Mouse-ear cress).